Here is a 153-residue protein sequence, read N- to C-terminus: Large ribosomal subunit protein bL9 (153 aa).

Belongs to the bacterial ribosomal protein bL9 family.

Functionally, binds to the 23S rRNA. The chain is Large ribosomal subunit protein bL9 from Gloeobacter violaceus (strain ATCC 29082 / PCC 7421).